The primary structure comprises 929 residues: Protocadherin gamma-B7 (929 aa).

A signal peptide spans 1-30; sequence MGGSCAQRRRAGPRQVLFPLLLPLFYPTLC. Cadherin domains are found at residues 31-133, 134-242, 243-347, 348-452, 453-562, and 570-675; these read EPIR…APQF, RKDE…PPVF, SQDV…SPEI, IITS…APVF, GQSA…APRV, and DGSA…LPDF. Over 31–691 the chain is Extracellular; sequence EPIRYSIPEE…SDSQAEMQFY (661 aa). Residues Asn419 and Asn545 are each glycosylated (N-linked (GlcNAc...) asparagine). The helical transmembrane segment at 692 to 712 threads the bilayer; it reads LVVALALISVLFLLAVILAIA. The Cytoplasmic portion of the chain corresponds to 713–929; that stretch reads LRLRQSFSPT…KKKSGKKEKK (217 aa). 2 disordered regions span residues 806-838 and 899-929; these read QAPPNTDWRFSQAQRPGTSGSQNGDDTGTWPNN and ATLTNAAGKRDGKAPAGGNGNKKKSGKKEKK. Positions 807 to 838 are enriched in polar residues; it reads APPNTDWRFSQAQRPGTSGSQNGDDTGTWPNN. The span at 919 to 929 shows a compositional bias: basic residues; the sequence is NKKKSGKKEKK.

Its subcellular location is the cell membrane. Functionally, potential calcium-dependent cell-adhesion protein. May be involved in the establishment and maintenance of specific neuronal connections in the brain. The polypeptide is Protocadherin gamma-B7 (PCDHGB7) (Homo sapiens (Human)).